Consider the following 162-residue polypeptide: Xanthine-guanine phosphoribosyltransferase (162 aa).

Residues 43-44 and 94-102 each bind 5-phospho-alpha-D-ribose 1-diphosphate; these read RG and DDLVDTGTT. Position 95 (Asp-95) interacts with Mg(2+). Asp-98 and Ile-141 together coordinate guanine. Asp-98 and Ile-141 together coordinate xanthine. Residues 98–102 and 140–141 contribute to the GMP site; these read DTGTT and WI.

This sequence belongs to the purine/pyrimidine phosphoribosyltransferase family. XGPT subfamily. Homotetramer. Requires Mg(2+) as cofactor.

It is found in the cell inner membrane. The enzyme catalyses GMP + diphosphate = guanine + 5-phospho-alpha-D-ribose 1-diphosphate. It carries out the reaction XMP + diphosphate = xanthine + 5-phospho-alpha-D-ribose 1-diphosphate. It catalyses the reaction IMP + diphosphate = hypoxanthine + 5-phospho-alpha-D-ribose 1-diphosphate. It participates in purine metabolism; GMP biosynthesis via salvage pathway; GMP from guanine: step 1/1. It functions in the pathway purine metabolism; XMP biosynthesis via salvage pathway; XMP from xanthine: step 1/1. Purine salvage pathway enzyme that catalyzes the transfer of the ribosyl-5-phosphate group from 5-phospho-alpha-D-ribose 1-diphosphate (PRPP) to the N9 position of the 6-oxopurines guanine and xanthine to form the corresponding ribonucleotides GMP (guanosine 5'-monophosphate) and XMP (xanthosine 5'-monophosphate), with the release of PPi. To a lesser extent, also acts on hypoxanthine. This Oleidesulfovibrio alaskensis (strain ATCC BAA-1058 / DSM 17464 / G20) (Desulfovibrio alaskensis) protein is Xanthine-guanine phosphoribosyltransferase.